Consider the following 316-residue polypeptide: 4-hydroxy-3-methylbut-2-enyl diphosphate reductase (316 aa).

[4Fe-4S] cluster is bound at residue Cys-12. Positions 41 and 74 each coordinate (2E)-4-hydroxy-3-methylbut-2-enyl diphosphate. His-41 and His-74 together coordinate dimethylallyl diphosphate. Residues His-41 and His-74 each coordinate isopentenyl diphosphate. [4Fe-4S] cluster is bound at residue Cys-96. His-124 is a binding site for (2E)-4-hydroxy-3-methylbut-2-enyl diphosphate. His-124 provides a ligand contact to dimethylallyl diphosphate. Residue His-124 participates in isopentenyl diphosphate binding. Residue Glu-126 is the Proton donor of the active site. Thr-168 is a (2E)-4-hydroxy-3-methylbut-2-enyl diphosphate binding site. Cys-198 serves as a coordination point for [4Fe-4S] cluster. Positions 226, 227, 228, and 270 each coordinate (2E)-4-hydroxy-3-methylbut-2-enyl diphosphate. Dimethylallyl diphosphate is bound by residues Ser-226, Ser-227, Asn-228, and Ser-270. Isopentenyl diphosphate-binding residues include Ser-226, Ser-227, Asn-228, and Ser-270.

Belongs to the IspH family. [4Fe-4S] cluster serves as cofactor.

It catalyses the reaction isopentenyl diphosphate + 2 oxidized [2Fe-2S]-[ferredoxin] + H2O = (2E)-4-hydroxy-3-methylbut-2-enyl diphosphate + 2 reduced [2Fe-2S]-[ferredoxin] + 2 H(+). The enzyme catalyses dimethylallyl diphosphate + 2 oxidized [2Fe-2S]-[ferredoxin] + H2O = (2E)-4-hydroxy-3-methylbut-2-enyl diphosphate + 2 reduced [2Fe-2S]-[ferredoxin] + 2 H(+). It participates in isoprenoid biosynthesis; dimethylallyl diphosphate biosynthesis; dimethylallyl diphosphate from (2E)-4-hydroxy-3-methylbutenyl diphosphate: step 1/1. Its pathway is isoprenoid biosynthesis; isopentenyl diphosphate biosynthesis via DXP pathway; isopentenyl diphosphate from 1-deoxy-D-xylulose 5-phosphate: step 6/6. Catalyzes the conversion of 1-hydroxy-2-methyl-2-(E)-butenyl 4-diphosphate (HMBPP) into a mixture of isopentenyl diphosphate (IPP) and dimethylallyl diphosphate (DMAPP). Acts in the terminal step of the DOXP/MEP pathway for isoprenoid precursor biosynthesis. This chain is 4-hydroxy-3-methylbut-2-enyl diphosphate reductase, found in Acinetobacter baylyi (strain ATCC 33305 / BD413 / ADP1).